We begin with the raw amino-acid sequence, 484 residues long: MSTSFDHSVILSPLDHIAPQAYVSYLLSFQTANSTHCLSLLEAGITRLTKVLPLLLGHIVVNPELDGKYNIQSVQIPCTKEDRTILVHKHHPFPMESALGGVQSGMSMLETSDSKQHLCPLPPLIPSTERQPVIRFQANIFTDAIVLAMTFSHIVFDGTGAAKILALLGRCCRDPSVTPLPLIIDEQDRAQSAIFAGLADTSPAQDHTAELGPAPAIHPVPLDAASLRTCRFEFNSERILQLKYQCSQVLKNACMFQPNSASIPVADLPPFLSSNDVLTSALADAIQRVKSQSKTYDCLDLCMAVNMRGRIELSAAREFLGNMACNLRLKTPGPEYTGPEQCLSCRKTHDCPIQTDQLRFLTDLACKVRNKVRNMDRKYFQSCMTYIANQKDWSQTGMIFTDLAFSSWRHLDIYGLDFGDSFGIVHNFDLSFGLIEGDVIFLPKRLTCDQKEAGWDVHITLPAKDLEALVKDDLIRWLMGRDGE.

The protein belongs to the fumigaclavine B O-acetyltransferase family. As to quaternary structure, monomer.

It carries out the reaction fumigaclavine B + acetyl-CoA = fumigaclavine A + CoA. It functions in the pathway alkaloid biosynthesis; ergot alkaloid biosynthesis. Its function is as follows. Fumigaclavine B O-acetyltransferase; part of the gene cluster that mediates the biosynthesis of isofumigaclavines, fungal ergot alkaloids. The tryptophan dimethylallyltransferase ifgA catalyzes the first step of ergot alkaloid biosynthesis by condensing dimethylallyl diphosphate (DMAP) and tryptophan to form 4-dimethylallyl-L-tryptophan. The second step is catalyzed by the methyltransferase ifgB that methylates 4-dimethylallyl-L-tryptophan in the presence of S-adenosyl-L-methionine, resulting in the formation of N-methyl-dimethylallyl-L-tryptophan. The catalase ifgD and the FAD-dependent oxidoreductase ifgC then transform N-methyl-dimethylallyl-L-tryptophan to chanoclavine-I which is further oxidized by ifgE in the presence of NAD(+), resulting in the formation of chanoclavine-I aldehyde. The chanoclavine-I aldehyde reductases ifgG and/or fgaOx3 reduce chanoclavine-I aldehyde to dihydrochanoclavine-I aldehyde that spontaneously dehydrates to form 6,8-dimethyl-6,7-didehydroergoline. The festuclavine dehydrogenases ifgF1 and/or ifgF2 then catalyze the reduction of 6,8-dimethyl-6,7-didehydroergoline to form festuclavine. Hydrolysis of festuclavine by a yet undetermined cytochrome P450 monooxygenase (called ifgH) then leads to the formation of isofumigaclavine B which is in turn acetylated by ifgI to isofumigaclavine A. Penicillium roqueforti has interestingly at least two sets of genes for the consumption of chanoclavine-I aldehyde on three different loci, the OYEs ifgG/fgaOx3 and the festuclavine synthase homologs ifgF1/ifgF2. The reason for the duplication of these genes is unclear, probably to ensure the conversion of chanoclavine-I aldehyde by differential gene expression under various environmental conditions. The polypeptide is Fumigaclavine B O-acetyltransferase ifgI (Penicillium roqueforti (strain FM164)).